The following is a 255-amino-acid chain: Pimeloyl-[acyl-carrier protein] methyl ester esterase (255 aa).

Residues Trp-18, 78–79 (SL), and 139–143 (FLALD) each bind substrate. The active-site Nucleophile is the Ser-78. Residues Asp-203 and His-233 contribute to the active site. His-233 is a binding site for substrate.

The protein belongs to the AB hydrolase superfamily. Carboxylesterase BioH family. Monomer.

The protein localises to the cytoplasm. It catalyses the reaction 6-carboxyhexanoyl-[ACP] methyl ester + H2O = 6-carboxyhexanoyl-[ACP] + methanol + H(+). The protein operates within cofactor biosynthesis; biotin biosynthesis. The physiological role of BioH is to remove the methyl group introduced by BioC when the pimeloyl moiety is complete. It allows to synthesize pimeloyl-ACP via the fatty acid synthetic pathway through the hydrolysis of the ester bonds of pimeloyl-ACP esters. The sequence is that of Pimeloyl-[acyl-carrier protein] methyl ester esterase from Xylella fastidiosa (strain M12).